We begin with the raw amino-acid sequence, 1018 residues long: Fibronectin-binding protein A (1018 aa).

The N-terminal stretch at 1–36 (MKNNLRYGIRKHKLGAASVFLGTMIVVGMGQDKEAA) is a signal peptide. A YSIRK-G/S signaling motif motif is present at residues 7 to 18 (YGIRKHKLGAAS). Residues 37 to 511 (ASEQKTTTVE…SNKANGNGKN (475 aa)) are ligand-binding A region. 2 disordered regions span residues 38-61 (SEQK…SETQ) and 78-195 (ATVT…ETGT). 2 stretches are compositionally biased toward polar residues: residues 39–61 (EQKT…SETQ) and 78–92 (ATVT…QVTT). The segment covering 112–126 (TVKEEVVKEEAKPQV) has biased composition (basic and acidic residues). The segment covering 129-139 (TTQSQDNSGDQ) has biased composition (polar residues). A fibrinogen/elastin/tropoelastin-binding region spans residues 194–511 (GTDVTSKVTV…SNKANGNGKN (318 aa)). The segment at 512 to 872 (GPIIQNNKFE…EGQQTIEEDT (361 aa)) is fibronectin-binding. A B-1 repeat occupies 545–574 (EEYDSSTLDIDYHTAIDGGGGYVDGYIETI). The segment at 545 to 604 (EEYDSSTLDIDYHTAIDGGGGYVDGYIETIEETDSSAIDIDYHTAVDSEAGHVGGYTESS) is 2 X approximate tandem repeats. The B-2 repeat unit spans residues 575-604 (EETDSSAIDIDYHTAVDSEAGHVGGYTESS). 3 disordered regions span residues 595–622 (GHVG…NSKH), 740–813 (LGYE…DIDF), and 827–997 (EIIE…GMLF). The D-1 repeat unit spans residues 745 to 782 (GQNSGNQSFEEDTEEDKPKYEQGGNIVDIDFDSVPQIH). The tract at residues 745–878 (GQNSGNQSFE…EEDTTPPIVP (134 aa)) is 4 X approximate tandem repeats. Residues 783-820 (GQNKGNQSFEEDTEKDKPKYEHGGNIIDIDFDSVPHIH) form a D-2 repeat. Residues 821-859 (GFNKHTEIIEEDTNKDKPSYQFGGHNSVDFEEDTLPKVS) form a D-3 repeat. Over residues 827-838 (EIIEEDTNKDKP) the composition is skewed to basic and acidic residues. One copy of the D-4; truncated repeat lies at 860 to 878 (GQNEGQQTIEEDTTPPIVP). Over residues 875-938 (PIVPPTPPTP…PAEPGKPVPP (64 aa)) the composition is skewed to pro residues. 5 WR repeats span residues 879–892 (PTPP…EPET), 893–906 (PTPP…EPET), 907–920 (PTPP…EPET), 921–934 (PTPP…EPGK), and 935–948 (PVPP…KPSK). Residues 879 to 948 (PTPPTPEVPS…AKEEPKKPSK (70 aa)) form a 5 X tandem repeats, Pro-rich (WR) region. The LPXTG sorting signal signature appears at 982–986 (LPETG). T985 carries the post-translational modification Pentaglycyl murein peptidoglycan amidated threonine. Residues 986-1018 (GGEESTNKGMLFGGLFSILGLALLRRNKKNHKA) constitute a propeptide, removed by sortase.

The protein resides in the secreted. Its subcellular location is the cell wall. In terms of biological role, promotes bacterial attachment to multiple substrates, such as fibronectin (Fn), fibrinogen (Fg), elastin peptides and tropoelastin. This confers to S.aureus the ability to invade endothelial cells. Promotes adherence to and aggregation of activated platelets. The polypeptide is Fibronectin-binding protein A (Staphylococcus aureus (strain USA300)).